Here is a 99-residue protein sequence, read N- to C-terminus: Glycine-rich protein (99 aa).

An N-terminal signal peptide occupies residues 1 to 18; the sequence is MKSMIAVLLLALVATSMA.

This sequence belongs to the non-disulfide-bridged peptide (NDBP) superfamily. As to expression, expressed by the venom gland.

Its subcellular location is the secreted. This is Glycine-rich protein from Lychas mucronatus (Chinese swimming scorpion).